The following is a 264-amino-acid chain: Thymidylate synthase (264 aa).

Arg21 is a binding site for dUMP. Residue His51 coordinates (6R)-5,10-methylene-5,6,7,8-tetrahydrofolate. 126–127 (RR) provides a ligand contact to dUMP. The active-site Nucleophile is Cys146. Residues 166 to 169 (RSCD), Asn177, and 207 to 209 (HLY) contribute to the dUMP site. (6R)-5,10-methylene-5,6,7,8-tetrahydrofolate is bound at residue Asp169. Position 263 (Ala263) interacts with (6R)-5,10-methylene-5,6,7,8-tetrahydrofolate.

Belongs to the thymidylate synthase family. Bacterial-type ThyA subfamily. Homodimer.

It localises to the cytoplasm. It catalyses the reaction dUMP + (6R)-5,10-methylene-5,6,7,8-tetrahydrofolate = 7,8-dihydrofolate + dTMP. Its pathway is pyrimidine metabolism; dTTP biosynthesis. In terms of biological role, catalyzes the reductive methylation of 2'-deoxyuridine-5'-monophosphate (dUMP) to 2'-deoxythymidine-5'-monophosphate (dTMP) while utilizing 5,10-methylenetetrahydrofolate (mTHF) as the methyl donor and reductant in the reaction, yielding dihydrofolate (DHF) as a by-product. This enzymatic reaction provides an intracellular de novo source of dTMP, an essential precursor for DNA biosynthesis. The polypeptide is Thymidylate synthase (Shewanella baltica (strain OS155 / ATCC BAA-1091)).